A 940-amino-acid polypeptide reads, in one-letter code: Isoleucine--tRNA ligase (940 aa).

A 'HIGH' region motif is present at residues 58 to 68 (PYANGSIHIGH). Position 564 (E564) interacts with L-isoleucyl-5'-AMP. The 'KMSKS' region motif lies at 605–609 (KMSKS). K608 is an ATP binding site. The Zn(2+) site is built by C903, C906, C923, and C926.

This sequence belongs to the class-I aminoacyl-tRNA synthetase family. IleS type 1 subfamily. As to quaternary structure, monomer. Requires Zn(2+) as cofactor.

Its subcellular location is the cytoplasm. The enzyme catalyses tRNA(Ile) + L-isoleucine + ATP = L-isoleucyl-tRNA(Ile) + AMP + diphosphate. In terms of biological role, catalyzes the attachment of isoleucine to tRNA(Ile). As IleRS can inadvertently accommodate and process structurally similar amino acids such as valine, to avoid such errors it has two additional distinct tRNA(Ile)-dependent editing activities. One activity is designated as 'pretransfer' editing and involves the hydrolysis of activated Val-AMP. The other activity is designated 'posttransfer' editing and involves deacylation of mischarged Val-tRNA(Ile). This Shewanella amazonensis (strain ATCC BAA-1098 / SB2B) protein is Isoleucine--tRNA ligase.